The following is an 873-amino-acid chain: DNA mismatch repair protein MutS (873 aa).

A disordered region spans residues 1-34 (MAAIPTPRLHRGVTHLSRQTKSRARHPMSTPQHT). Positions 8–26 (RLHRGVTHLSRQTKSRARH) are enriched in basic residues. 635–642 (GPNMGGKS) provides a ligand contact to ATP.

The protein belongs to the DNA mismatch repair MutS family.

Functionally, this protein is involved in the repair of mismatches in DNA. It is possible that it carries out the mismatch recognition step. This protein has a weak ATPase activity. This chain is DNA mismatch repair protein MutS, found in Chromobacterium violaceum (strain ATCC 12472 / DSM 30191 / JCM 1249 / CCUG 213 / NBRC 12614 / NCIMB 9131 / NCTC 9757 / MK).